The following is a 201-amino-acid chain: Superoxide dismutase [Mn/Fe] (201 aa).

Residues His27, His75, Asp161, and His165 each contribute to the Fe(3+) site. 4 residues coordinate Mn(2+): His27, His75, Asp161, and His165.

Belongs to the iron/manganese superoxide dismutase family. As to quaternary structure, homotetramer. The cofactor is Mn(2+). Fe(3+) serves as cofactor.

It carries out the reaction 2 superoxide + 2 H(+) = H2O2 + O2. Shows decreasing activity with increasing pH. Slightly inhibited by azide and fluoride at pH 7-8; the inhibition is drastically increased towards lower pH. Functionally, destroys superoxide anion radicals which are normally produced within the cells and which are toxic to biological systems. Catalyzes the dismutation of superoxide anion radicals into O2 and H2O2 by successive reduction and oxidation of the transition metal ion at the active site. This Propionibacterium freudenreichii subsp. shermanii protein is Superoxide dismutase [Mn/Fe] (sodA).